The sequence spans 193 residues: Probable DNA-directed RNA polymerase subunit delta (193 aa).

In terms of domain architecture, HTH HARE-type spans 14-81 (LALVEIATAI…GNNEWGLRAW (68 aa)). 2 stretches are compositionally biased toward acidic residues: residues 119–174 (DDDV…DDNL) and 182–193 (DLDDLSDGDIEK). Residues 119–193 (DDDVIDYNDD…DDLSDGDIEK (75 aa)) are disordered.

This sequence belongs to the RpoE family. As to quaternary structure, RNAP is composed of a core of 2 alpha, a beta and a beta' subunits. The core is associated with a delta subunit and one of several sigma factors.

Its function is as follows. Participates in both the initiation and recycling phases of transcription. In the presence of the delta subunit, RNAP displays an increased specificity of transcription, a decreased affinity for nucleic acids, and an increased efficiency of RNA synthesis because of enhanced recycling. The sequence is that of Probable DNA-directed RNA polymerase subunit delta from Leuconostoc citreum (strain KM20).